The sequence spans 351 residues: Sesquiterpene synthase 14 (351 aa).

The Mg(2+) site is built by Asp-87, Asn-223, Ser-227, and Glu-231. Residues Asp-87–Asp-91 carry the DDXXD motif motif. An NSE/DTE motif motif is present at residues Asn-223–Glu-231. 2 residues coordinate (2E,6E)-farnesyl diphosphate: Arg-312 and Tyr-313.

This sequence belongs to the terpene synthase family. The cofactor is Mg(2+).

The catalysed reaction is (2E,6E)-farnesyl diphosphate = pentalenene + diphosphate. In terms of biological role, terpene cyclase that catalyzes the cyclization of farnesyl diphosphate (FPP) to pentalenene as a major product, as well as caryophyllene. The polypeptide is Sesquiterpene synthase 14 (Postia placenta (strain ATCC 44394 / Madison 698-R) (Brown rot fungus)).